Here is a 403-residue protein sequence, read N- to C-terminus: Tripartite motif-containing protein 59 (403 aa).

The segment at 10 to 60 (CPICYSIFEDPRVLPCSHTFCRNCLENILQASGNFYIWRPLRIPLKCPNCR) adopts an RING-type zinc-finger fold. Residues 92-134 (PDIVTCPEHYRQPLNVYCLLDKKLVCGHCLTIGQHHGHPIDDL) form a B box-type zinc finger. Residues Cys-97, His-100, Cys-120, and His-126 each coordinate Zn(2+). A coiled-coil region spans residues 163-246 (LIEKLKEQKS…ALTISLQEES (84 aa)). Residues 329–349 (ILNIVVVTLISVILMSILFFN) form a helical membrane-spanning segment.

The protein belongs to the TRIM/RBCC family. Interacts with ECSIT.

It localises to the endoplasmic reticulum membrane. It carries out the reaction S-ubiquitinyl-[E2 ubiquitin-conjugating enzyme]-L-cysteine + [acceptor protein]-L-lysine = [E2 ubiquitin-conjugating enzyme]-L-cysteine + N(6)-ubiquitinyl-[acceptor protein]-L-lysine.. Its pathway is protein modification; protein ubiquitination. Its function is as follows. E3 ubiquitin ligase involved in different processes such as development and immune response. Serves as a negative regulator for innate immune signaling pathways by suppressing RLR-induced activation of IRF3/7 and NF-kappa-B via interaction with adapter ECSIT. Regulates autophagy through modulating both the transcription and the ubiquitination of BECN1. On the one hand, regulates the transcription of BECN1 through negatively modulating the NF-kappa-B pathway. On the other hand, regulates TRAF6-mediated 'Lys-63'-linked ubiquitination of BECN1, thus affecting the formation of the BECN1-PIK3C3 complex. In addition, mediates 'Lys-48'-linked ubiquitination of TRAF6 and thereby promotes TRAF6 proteasomal degradation. Also acts as a critical regulator for early embryo development from blastocyst stage to gastrula through modulating F-actin assembly and WASH1 'Lys-63'-linked ubiquitination. This is Tripartite motif-containing protein 59 (TRIM59) from Homo sapiens (Human).